Reading from the N-terminus, the 178-residue chain is Probable chorismate pyruvate-lyase (178 aa).

3 residues coordinate substrate: Arg73, Leu111, and Glu163.

Belongs to the UbiC family.

It localises to the cytoplasm. The catalysed reaction is chorismate = 4-hydroxybenzoate + pyruvate. Its pathway is cofactor biosynthesis; ubiquinone biosynthesis. Its function is as follows. Removes the pyruvyl group from chorismate, with concomitant aromatization of the ring, to provide 4-hydroxybenzoate (4HB) for the ubiquinone pathway. This Pseudomonas aeruginosa (strain ATCC 15692 / DSM 22644 / CIP 104116 / JCM 14847 / LMG 12228 / 1C / PRS 101 / PAO1) protein is Probable chorismate pyruvate-lyase.